Here is a 740-residue protein sequence, read N- to C-terminus: 1,4-alpha-glucan branching enzyme GlgB (740 aa).

The active-site Nucleophile is Asp-419. Glu-472 (proton donor) is an active-site residue.

Belongs to the glycosyl hydrolase 13 family. GlgB subfamily. In terms of assembly, monomer.

It catalyses the reaction Transfers a segment of a (1-&gt;4)-alpha-D-glucan chain to a primary hydroxy group in a similar glucan chain.. It participates in glycan biosynthesis; glycogen biosynthesis. Catalyzes the formation of the alpha-1,6-glucosidic linkages in glycogen by scission of a 1,4-alpha-linked oligosaccharide from growing alpha-1,4-glucan chains and the subsequent attachment of the oligosaccharide to the alpha-1,6 position. This Thiobacillus denitrificans (strain ATCC 25259 / T1) protein is 1,4-alpha-glucan branching enzyme GlgB.